The following is a 154-amino-acid chain: Transmembrane protein 35B (154 aa).

The signal sequence occupies residues 1–22 (MALLLSVLRVLLGGFFALVGLA). The next 3 helical transmembrane spans lie at 63–83 (IAVGFLELLAGLLLVMGPPML), 85–105 (EISNLFLILLMMGAIFTLAAL), and 112–132 (CIPAIVCLGFLLLLNVGQLLA).

The protein belongs to the DoxX family.

It is found in the membrane. In Homo sapiens (Human), this protein is Transmembrane protein 35B.